The following is a 320-amino-acid chain: NAD kinase (320 aa).

D96 (proton acceptor) is an active-site residue. Residues 96–97, R101, 170–171, D200, and 211–216 contribute to the NAD(+) site; these read DG, NE, and TAYAFS.

This sequence belongs to the NAD kinase family. A divalent metal cation serves as cofactor.

The protein localises to the cytoplasm. It carries out the reaction NAD(+) + ATP = ADP + NADP(+) + H(+). Involved in the regulation of the intracellular balance of NAD and NADP, and is a key enzyme in the biosynthesis of NADP. Catalyzes specifically the phosphorylation on 2'-hydroxyl of the adenosine moiety of NAD to yield NADP. This Rhodococcus jostii (strain RHA1) protein is NAD kinase.